The chain runs to 198 residues: 7-methyl-GTP pyrophosphatase (198 aa).

Asp69 functions as the Proton acceptor in the catalytic mechanism.

This sequence belongs to the Maf family. YceF subfamily. A divalent metal cation serves as cofactor.

Its subcellular location is the cytoplasm. The enzyme catalyses N(7)-methyl-GTP + H2O = N(7)-methyl-GMP + diphosphate + H(+). Functionally, nucleoside triphosphate pyrophosphatase that hydrolyzes 7-methyl-GTP (m(7)GTP). May have a dual role in cell division arrest and in preventing the incorporation of modified nucleotides into cellular nucleic acids. In Yersinia pseudotuberculosis serotype I (strain IP32953), this protein is 7-methyl-GTP pyrophosphatase.